Consider the following 285-residue polypeptide: ATP phosphoribosyltransferase (285 aa).

It belongs to the ATP phosphoribosyltransferase family. Long subfamily. It depends on Mg(2+) as a cofactor.

The protein resides in the cytoplasm. The enzyme catalyses 1-(5-phospho-beta-D-ribosyl)-ATP + diphosphate = 5-phospho-alpha-D-ribose 1-diphosphate + ATP. The protein operates within amino-acid biosynthesis; L-histidine biosynthesis; L-histidine from 5-phospho-alpha-D-ribose 1-diphosphate: step 1/9. Feedback inhibited by histidine. In terms of biological role, catalyzes the condensation of ATP and 5-phosphoribose 1-diphosphate to form N'-(5'-phosphoribosyl)-ATP (PR-ATP). Has a crucial role in the pathway because the rate of histidine biosynthesis seems to be controlled primarily by regulation of HisG enzymatic activity. This Methanocella arvoryzae (strain DSM 22066 / NBRC 105507 / MRE50) protein is ATP phosphoribosyltransferase.